Consider the following 299-residue polypeptide: Xyloglucan endotransglucosylase protein 6 (299 aa).

A signal peptide spans 1 to 25; the sequence is MASSLTLPMAMAFTLLALSFASAMG. The GH16 domain occupies 26 to 219; sequence GSMNSSRFDE…WSHAPFVASY (194 aa). Glu105 acts as the Nucleophile in catalysis. The active-site Proton donor is the Glu109. Glu109 is a xyloglucan binding site. N-linked (GlcNAc...) asparagine glycosylation occurs at Asn113. Residues 122–124, 132–134, 198–199, and Gly203 contribute to the xyloglucan site; these read QTN, NRE, and DW. 2 disulfides stabilise this stretch: Cys227/Cys242 and Cys281/Cys294. Arg286 is a binding site for xyloglucan.

Belongs to the glycosyl hydrolase 16 family. XTH group 1 subfamily. In terms of processing, contains at least one intrachain disulfide bond essential for its enzymatic activity. Highest expression in ripe leaves after full expansion. Also expressed in fruits, and at a lower level in flowers and stems (picked at anthesis).

It localises to the secreted. Its subcellular location is the cell wall. The protein localises to the extracellular space. The protein resides in the apoplast. It carries out the reaction breaks a beta-(1-&gt;4) bond in the backbone of a xyloglucan and transfers the xyloglucanyl segment on to O-4 of the non-reducing terminal glucose residue of an acceptor, which can be a xyloglucan or an oligosaccharide of xyloglucan.. Functionally, catalyzes xyloglucan endotransglycosylation (XET). Cleaves and religates xyloglucan polymers. Does not catalyze xyloglucan endohydrolysis (XEH). Probably involved in cell wall restructuring during postharvest fruit softening. The sequence is that of Xyloglucan endotransglucosylase protein 6 from Diospyros kaki (Kaki persimmon).